Consider the following 233-residue polypeptide: C-type lectin domain family 2 member D2 (233 aa).

The tract at residues Met-1 to Gly-34 is disordered. The Cytoplasmic segment spans residues Met-1 to Cys-76. Residues Cys-77–Val-97 form a helical; Signal-anchor for type II membrane protein membrane-spanning segment. Over Lys-98–Gln-233 the chain is Extracellular. In terms of domain architecture, C-type lectin spans Val-119 to Tyr-228. Asn-132 carries N-linked (GlcNAc...) asparagine glycosylation.

Its subcellular location is the cell membrane. In terms of biological role, lectin-type cell surface receptor. The polypeptide is C-type lectin domain family 2 member D2 (Clec2d2) (Rattus norvegicus (Rat)).